The following is a 952-amino-acid chain: Glycine dehydrogenase (decarboxylating) (952 aa).

K703 carries the post-translational modification N6-(pyridoxal phosphate)lysine.

It belongs to the GcvP family. The glycine cleavage system is composed of four proteins: P, T, L and H. The cofactor is pyridoxal 5'-phosphate.

It carries out the reaction N(6)-[(R)-lipoyl]-L-lysyl-[glycine-cleavage complex H protein] + glycine + H(+) = N(6)-[(R)-S(8)-aminomethyldihydrolipoyl]-L-lysyl-[glycine-cleavage complex H protein] + CO2. The glycine cleavage system catalyzes the degradation of glycine. The P protein binds the alpha-amino group of glycine through its pyridoxal phosphate cofactor; CO(2) is released and the remaining methylamine moiety is then transferred to the lipoamide cofactor of the H protein. This chain is Glycine dehydrogenase (decarboxylating), found in Mycolicibacterium gilvum (strain PYR-GCK) (Mycobacterium gilvum (strain PYR-GCK)).